A 341-amino-acid chain; its full sequence is tRNA N6-adenosine threonylcarbamoyltransferase (341 aa).

Positions 111 and 115 each coordinate Fe cation. Substrate-binding positions include Leu-134 to Gly-138, Asp-167, Gly-180, and Asn-276. Asp-304 contributes to the Fe cation binding site.

It belongs to the KAE1 / TsaD family. It depends on Fe(2+) as a cofactor.

It is found in the cytoplasm. It carries out the reaction L-threonylcarbamoyladenylate + adenosine(37) in tRNA = N(6)-L-threonylcarbamoyladenosine(37) in tRNA + AMP + H(+). Its function is as follows. Required for the formation of a threonylcarbamoyl group on adenosine at position 37 (t(6)A37) in tRNAs that read codons beginning with adenine. Is involved in the transfer of the threonylcarbamoyl moiety of threonylcarbamoyl-AMP (TC-AMP) to the N6 group of A37, together with TsaE and TsaB. TsaD likely plays a direct catalytic role in this reaction. In Pseudomonas putida (strain ATCC 47054 / DSM 6125 / CFBP 8728 / NCIMB 11950 / KT2440), this protein is tRNA N6-adenosine threonylcarbamoyltransferase.